A 147-amino-acid chain; its full sequence is Hemoglobin subunit beta-2 (147 aa).

The region spanning 3–147 is the Globin domain; that stretch reads EWTDSERAII…VVSALGRQYH (145 aa). Heme b-binding residues include His-64 and His-93.

This sequence belongs to the globin family. Hb 3 is a heterotetramer of two alpha-2 and two beta-2 chains. As to expression, red blood cells.

Involved in oxygen transport from gills to the various peripheral tissues. The polypeptide is Hemoglobin subunit beta-2 (hbb2) (Arctogadus glacialis (Arctic cod)).